Reading from the N-terminus, the 927-residue chain is Solute carrier family 12 protein B0303.11 (927 aa).

The Cytoplasmic portion of the chain corresponds to 1-23 (MPSSTASSEDAPITSTAWMNWKD). A helical transmembrane segment spans residues 24–44 (VFLKCVQPMLAVVLLLRFSSI). Topologically, residues 45–53 (VDEAGFTTT) are extracellular. A helical membrane pass occupies residues 54-74 (IILVFFTFLVSLVTGWSACTV). Over 75–95 (VSRKSSEVGFVKTMLAYSSTE) the chain is Cytoplasmic. Residues 96-116 (FAISFSIIYLFCLLVATSTFL) traverse the membrane as a helical segment. Residues 117–141 (TSAAEAVLHIFSTFSLELLDGATHD) are Extracellular-facing. Residues 142–159 (LRLVSSVLSLITLALCMV) traverse the membrane as a helical segment. Topologically, residues 160–165 (RNRNAR) are cytoplasmic. Residues 166-186 (FVRTFIFALTCIAIALQLSSV) traverse the membrane as a helical segment. Residues 187–212 (MFRYGEYQLRRVSDRNAMIPSPPNEE) are Extracellular-facing. Residues 213–233 (ISTIFAQLFPAAMCGLTILNI) traverse the membrane as a helical segment. At 234 to 244 (GSKLQNTAPRG) the chain is on the cytoplasmic side. Residues 245 to 265 (ALIAIAVSACFYGAAAMLDYV) traverse the membrane as a helical segment. Over 266–284 (EFFARTSTSNSTGSAEYNE) the chain is Extracellular. N-linked (GlcNAc...) asparagine glycosylation is present at N275. Residues 285-305 (FLSYIYTTVPMAIVITLACVL) form a helical membrane-spanning segment. Over 306–345 (SAVSTLKYAAVILQSLGRSNQCRCILWLAKGFGERDIPIR) the chain is Cytoplasmic. The helical transmembrane segment at 346 to 366 (CLLLLSTVQILVSAIGSYDIL) threads the bilayer. C367 is a topological domain (extracellular). Residues 368–388 (IPTTVFYLFAYALFNFYVFLV) traverse the membrane as a helical segment. The Cytoplasmic portion of the chain corresponds to 389-394 (KLSDPE). Residues 395-415 (IPSPPTLLSLAISAACFIASL) traverse the membrane as a helical segment. The Extracellular portion of the chain corresponds to 416 to 419 (YTNR). A helical transmembrane segment spans residues 420-440 (HLALFIASIFAISYCSLLYII). At 441 to 927 (RRERNEDGEE…SMSALRLKFP (487 aa)) the chain is on the cytoplasmic side.

It belongs to the SLC12A transporter family.

It localises to the cell membrane. This Caenorhabditis elegans protein is Solute carrier family 12 protein B0303.11.